A 311-amino-acid chain; its full sequence is HPr kinase/phosphorylase (311 aa).

Catalysis depends on residues His-138 and Lys-159. 153-160 (GKSGVGKS) contributes to the ATP binding site. Ser-160 lines the Mg(2+) pocket. The active-site Proton acceptor; for phosphorylation activity. Proton donor; for dephosphorylation activity is Asp-177. The segment at 201–210 (LEIRGLGIIN) is important for the catalytic mechanism of both phosphorylation and dephosphorylation. Glu-202 serves as a coordination point for Mg(2+). Residue Arg-243 is part of the active site. An important for the catalytic mechanism of dephosphorylation region spans residues 264–269 (PVRPGR).

This sequence belongs to the HPrK/P family. Homohexamer. The cofactor is Mg(2+).

The catalysed reaction is [HPr protein]-L-serine + ATP = [HPr protein]-O-phospho-L-serine + ADP + H(+). The enzyme catalyses [HPr protein]-O-phospho-L-serine + phosphate + H(+) = [HPr protein]-L-serine + diphosphate. In terms of biological role, catalyzes the ATP- as well as the pyrophosphate-dependent phosphorylation of a specific serine residue in HPr, a phosphocarrier protein of the phosphoenolpyruvate-dependent sugar phosphotransferase system (PTS). HprK/P also catalyzes the pyrophosphate-producing, inorganic phosphate-dependent dephosphorylation (phosphorolysis) of seryl-phosphorylated HPr (P-Ser-HPr). The two antagonistic activities of HprK/P are regulated by several intracellular metabolites, which change their concentration in response to the absence or presence of rapidly metabolisable carbon sources (glucose, fructose, etc.) in the growth medium. Also phosphorylates/dephosphorylates the HPr-like catabolite repression protein crh on a specific serine residue. Therefore, by controlling the phosphorylation state of HPr and crh, HPrK/P is a sensor enzyme that plays a major role in the regulation of carbon metabolism and sugar transport: it mediates carbon catabolite repression (CCR), and regulates PTS-catalyzed carbohydrate uptake and inducer exclusion. The sequence is that of HPr kinase/phosphorylase from Geobacillus kaustophilus (strain HTA426).